The following is a 185-amino-acid chain: ATP-dependent protease subunit HslV (185 aa).

The active site involves Thr-6. Positions 162, 165, and 168 each coordinate Na(+).

Belongs to the peptidase T1B family. HslV subfamily. As to quaternary structure, a double ring-shaped homohexamer of HslV is capped on each side by a ring-shaped HslU homohexamer. The assembly of the HslU/HslV complex is dependent on binding of ATP.

The protein resides in the cytoplasm. The enzyme catalyses ATP-dependent cleavage of peptide bonds with broad specificity.. Allosterically activated by HslU binding. Protease subunit of a proteasome-like degradation complex believed to be a general protein degrading machinery. The chain is ATP-dependent protease subunit HslV from Nitratidesulfovibrio vulgaris (strain DSM 19637 / Miyazaki F) (Desulfovibrio vulgaris).